The primary structure comprises 231 residues: 7-cyano-7-deazaguanine synthase (231 aa).

An ATP-binding site is contributed by Phe-8–Leu-18. Residues Cys-188, Cys-197, Cys-200, and Cys-203 each coordinate Zn(2+).

It belongs to the QueC family. The cofactor is Zn(2+).

The catalysed reaction is 7-carboxy-7-deazaguanine + NH4(+) + ATP = 7-cyano-7-deazaguanine + ADP + phosphate + H2O + H(+). Its pathway is purine metabolism; 7-cyano-7-deazaguanine biosynthesis. In terms of biological role, catalyzes the ATP-dependent conversion of 7-carboxy-7-deazaguanine (CDG) to 7-cyano-7-deazaguanine (preQ(0)). The protein is 7-cyano-7-deazaguanine synthase of Escherichia coli O157:H7.